We begin with the raw amino-acid sequence, 157 residues long: 2-C-methyl-D-erythritol 2,4-cyclodiphosphate synthase (157 aa).

Residues aspartate 8 and histidine 10 each coordinate a divalent metal cation. Residues 8–10 (DIH) and 34–35 (HS) contribute to the 4-CDP-2-C-methyl-D-erythritol 2-phosphate site. Residue histidine 42 participates in a divalent metal cation binding. 4-CDP-2-C-methyl-D-erythritol 2-phosphate is bound by residues 56 to 58 (DIG) and 132 to 135 (TTNE).

It belongs to the IspF family. In terms of assembly, homotrimer. A divalent metal cation serves as cofactor.

The catalysed reaction is 4-CDP-2-C-methyl-D-erythritol 2-phosphate = 2-C-methyl-D-erythritol 2,4-cyclic diphosphate + CMP. It functions in the pathway isoprenoid biosynthesis; isopentenyl diphosphate biosynthesis via DXP pathway; isopentenyl diphosphate from 1-deoxy-D-xylulose 5-phosphate: step 4/6. In terms of biological role, involved in the biosynthesis of isopentenyl diphosphate (IPP) and dimethylallyl diphosphate (DMAPP), two major building blocks of isoprenoid compounds. Catalyzes the conversion of 4-diphosphocytidyl-2-C-methyl-D-erythritol 2-phosphate (CDP-ME2P) to 2-C-methyl-D-erythritol 2,4-cyclodiphosphate (ME-CPP) with a corresponding release of cytidine 5-monophosphate (CMP). The chain is 2-C-methyl-D-erythritol 2,4-cyclodiphosphate synthase from Synechococcus sp. (strain JA-3-3Ab) (Cyanobacteria bacterium Yellowstone A-Prime).